A 159-amino-acid polypeptide reads, in one-letter code: SsrA-binding protein (159 aa).

The protein belongs to the SmpB family.

It is found in the cytoplasm. Its function is as follows. Required for rescue of stalled ribosomes mediated by trans-translation. Binds to transfer-messenger RNA (tmRNA), required for stable association of tmRNA with ribosomes. tmRNA and SmpB together mimic tRNA shape, replacing the anticodon stem-loop with SmpB. tmRNA is encoded by the ssrA gene; the 2 termini fold to resemble tRNA(Ala) and it encodes a 'tag peptide', a short internal open reading frame. During trans-translation Ala-aminoacylated tmRNA acts like a tRNA, entering the A-site of stalled ribosomes, displacing the stalled mRNA. The ribosome then switches to translate the ORF on the tmRNA; the nascent peptide is terminated with the 'tag peptide' encoded by the tmRNA and targeted for degradation. The ribosome is freed to recommence translation, which seems to be the essential function of trans-translation. The chain is SsrA-binding protein from Coxiella burnetii (strain CbuK_Q154) (Coxiella burnetii (strain Q154)).